The primary structure comprises 103 residues: Small ribosomal subunit protein uS10 (103 aa).

This sequence belongs to the universal ribosomal protein uS10 family. Part of the 30S ribosomal subunit.

Involved in the binding of tRNA to the ribosomes. The polypeptide is Small ribosomal subunit protein uS10 (Actinobacillus pleuropneumoniae serotype 5b (strain L20)).